The primary structure comprises 175 residues: Shikimate kinase (175 aa).

12-19 (GGRASGKS) contributes to the ATP binding site.

Belongs to the shikimate kinase family.

It localises to the cytoplasm. It catalyses the reaction shikimate + ATP = 3-phosphoshikimate + ADP + H(+). Its pathway is metabolic intermediate biosynthesis; chorismate biosynthesis; chorismate from D-erythrose 4-phosphate and phosphoenolpyruvate: step 5/7. This Nitratidesulfovibrio vulgaris (strain ATCC 29579 / DSM 644 / CCUG 34227 / NCIMB 8303 / VKM B-1760 / Hildenborough) (Desulfovibrio vulgaris) protein is Shikimate kinase.